A 332-amino-acid polypeptide reads, in one-letter code: Ferredoxin--NADP reductase (332 aa).

FAD-binding residues include Asp-33, Gln-41, Tyr-46, Ala-86, Ile-121, Asp-282, and Ser-325.

This sequence belongs to the ferredoxin--NADP reductase type 2 family. As to quaternary structure, homodimer. FAD serves as cofactor.

It carries out the reaction 2 reduced [2Fe-2S]-[ferredoxin] + NADP(+) + H(+) = 2 oxidized [2Fe-2S]-[ferredoxin] + NADPH. This is Ferredoxin--NADP reductase from Metallosphaera sedula (strain ATCC 51363 / DSM 5348 / JCM 9185 / NBRC 15509 / TH2).